Reading from the N-terminus, the 375-residue chain is Enoyl-[acyl-carrier-protein] reductase, mitochondrial (375 aa).

The N-terminal 37 residues, 1 to 37 (MAALMESVVGRALKFSSTANFRSIRRGETPTLCIKSF), are a transit peptide targeting the mitochondrion. The active-site Proton donor is the Y96. NADP(+) contacts are provided by residues N169, 195 to 198 (TSIV), 218 to 220 (RDR), 287 to 290 (YGGM), 312 to 314 (FWL), and K370.

Belongs to the zinc-containing alcohol dehydrogenase family. Quinone oxidoreductase subfamily. Homodimer.

Its subcellular location is the mitochondrion. The enzyme catalyses a 2,3-saturated acyl-[ACP] + NADP(+) = a (2E)-enoyl-[ACP] + NADPH + H(+). Its function is as follows. Catalyzes the NADPH-dependent reduction of trans-2-enoyl thioesters in mitochondrial fatty acid synthesis (fatty acid synthesis type II). Fatty acid chain elongation in mitochondria uses acyl carrier protein (ACP) as an acyl group carrier, but the enzyme accepts both ACP and CoA thioesters as substrates in vitro. This is Enoyl-[acyl-carrier-protein] reductase, mitochondrial from Arabidopsis thaliana (Mouse-ear cress).